Here is a 1693-residue protein sequence, read N- to C-terminus: Putative stoned B-like protein (1693 aa).

A compositionally biased stretch (basic and acidic residues) spans 1-12 (MSWRDRDFDPHG). 7 disordered regions span residues 1 to 54 (MSWR…ELPA), 222 to 322 (NQIP…VEKS), 334 to 371 (TVEI…PTFS), 383 to 438 (KEMT…DPNA), 585 to 807 (GDYH…TSAA), 841 to 869 (KKME…DEED), and 899 to 1024 (PVKE…FVAD). Positions 26 to 39 (SSSERAASMRAMRS) are enriched in low complexity. 2 stretches are compositionally biased toward basic and acidic residues: residues 279-301 (MEDK…KEET) and 311-322 (TTEKHQNEVEKS). The segment covering 360-371 (EEEEDDDLPTFS) has biased composition (acidic residues). The segment covering 393–412 (ENVENEKQEDTHISEGHVEY) has biased composition (basic and acidic residues). Polar residues predominate over residues 596–615 (DENSTSAISGYEQNGASTSL). A compositionally biased stretch (low complexity) spans 632–643 (YYQGQEYQQEYY). The DPF 1 motif lies at 684 to 686 (DPF). Residues 708–722 (SPTPEASSSTGTSAP) are compositionally biased toward low complexity. Residues 745 to 760 (PPRPPPAARPPPPRPA) show a composition bias toward pro residues. The segment covering 786–807 (KVSTAVKSTESTLKNLEETSAA) has biased composition (polar residues). A compositionally biased stretch (basic and acidic residues) spans 899–913 (PVKEIKKAPEIRRVD). Short sequence motifs (DPF) lie at residues 1006–1008 (DPF), 1024–1026 (DPF), and 1039–1041 (DPF). Positions 1062 to 1095 (ANAENEDDFYNGRQSPTLSTPTPEGGSPISQQRP) are disordered. Residues 1073–1095 (GRQSPTLSTPTPEGGSPISQQRP) are compositionally biased toward polar residues. One can recognise an SHD domain in the interval 1136–1283 (GWDLMVRHPI…KCKITRTAKP (148 aa)). The region spanning 1287 to 1606 (QDEVQIHCYD…AKYQYKVEID (320 aa)) is the MHD domain. The tract at residues 1633–1693 (ELHQPTFNPS…IQIDMKNYGY (61 aa)) is disordered. Residues 1637–1651 (PTFNPSTQESDTQQG) show a composition bias toward polar residues.

It belongs to the Stoned B family.

It localises to the cytoplasm. In terms of biological role, potential adapter protein, which may be involved in endocytic vesicle recycling of synaptic vesicles. The polypeptide is Putative stoned B-like protein (unc-41) (Caenorhabditis elegans).